Here is a 250-residue protein sequence, read N- to C-terminus: 2,3-bisphosphoglycerate-dependent phosphoglycerate mutase (250 aa).

Residues 12-19 (RHGQSAWN), 25-26 (TG), Arg64, 91-94 (ERHY), Lys102, 118-119 (RR), and 185-186 (GN) contribute to the substrate site. His13 (tele-phosphohistidine intermediate) is an active-site residue. Glu91 functions as the Proton donor/acceptor in the catalytic mechanism.

It belongs to the phosphoglycerate mutase family. BPG-dependent PGAM subfamily.

The enzyme catalyses (2R)-2-phosphoglycerate = (2R)-3-phosphoglycerate. The protein operates within carbohydrate degradation; glycolysis; pyruvate from D-glyceraldehyde 3-phosphate: step 3/5. Catalyzes the interconversion of 2-phosphoglycerate and 3-phosphoglycerate. The chain is 2,3-bisphosphoglycerate-dependent phosphoglycerate mutase from Corynebacterium efficiens (strain DSM 44549 / YS-314 / AJ 12310 / JCM 11189 / NBRC 100395).